Here is a 117-residue protein sequence, read N- to C-terminus: Large ribosomal subunit protein bL20 (117 aa).

This sequence belongs to the bacterial ribosomal protein bL20 family.

Its function is as follows. Binds directly to 23S ribosomal RNA and is necessary for the in vitro assembly process of the 50S ribosomal subunit. It is not involved in the protein synthesizing functions of that subunit. This is Large ribosomal subunit protein bL20 from Vibrio metschnikovii.